A 363-amino-acid polypeptide reads, in one-letter code: MTTDLKKTPLYQNYVDSGAKIVEFGGWAMPVQFSSIKEEHNAVRYNVGLFDVSHMGEIEISGKDAEQFIQYILSNDTNLLTNDKAMYSALCNDEGGIIDDLVTYKLNENHYLLIVNAANTNKDYQWIKKHSSNFTVDVSNTSDKYGQLAIQGPHSRALINELVDIDVSHMAMFEFKQNVQIFGKSIILSQSGYTGEDGFEIYCKQEDTKDIWEQLLEYDVTPCGLGARDTLRLEAGLPLHGQDLSESITPYEGGIAFAAKPLIENHFIGKSVLKAQKENGSERRTVGLELLGKGIARTGYDVLDENSNEIGFVTSGTQSPSSGKSIALAIIDRDAFEMGKKVIVQIRKRQVEAKIVKKNQIEK.

This sequence belongs to the GcvT family. In terms of assembly, the glycine cleavage system is composed of four proteins: P, T, L and H.

The enzyme catalyses N(6)-[(R)-S(8)-aminomethyldihydrolipoyl]-L-lysyl-[protein] + (6S)-5,6,7,8-tetrahydrofolate = N(6)-[(R)-dihydrolipoyl]-L-lysyl-[protein] + (6R)-5,10-methylene-5,6,7,8-tetrahydrofolate + NH4(+). Functionally, the glycine cleavage system catalyzes the degradation of glycine. This Staphylococcus epidermidis (strain ATCC 35984 / DSM 28319 / BCRC 17069 / CCUG 31568 / BM 3577 / RP62A) protein is Aminomethyltransferase.